We begin with the raw amino-acid sequence, 132 residues long: Small ribosomal subunit protein uS8 (132 aa).

This sequence belongs to the universal ribosomal protein uS8 family. As to quaternary structure, part of the 30S ribosomal subunit. Contacts proteins S5 and S12.

In terms of biological role, one of the primary rRNA binding proteins, it binds directly to 16S rRNA central domain where it helps coordinate assembly of the platform of the 30S subunit. The chain is Small ribosomal subunit protein uS8 from Paenarthrobacter aurescens (strain TC1).